Here is a 492-residue protein sequence, read N- to C-terminus: Argininosuccinate lyase (492 aa).

It belongs to the lyase 1 family. Argininosuccinate lyase subfamily.

It is found in the cytoplasm. It carries out the reaction 2-(N(omega)-L-arginino)succinate = fumarate + L-arginine. It functions in the pathway amino-acid biosynthesis; L-arginine biosynthesis; L-arginine from L-ornithine and carbamoyl phosphate: step 3/3. The chain is Argininosuccinate lyase from Methanoculleus marisnigri (strain ATCC 35101 / DSM 1498 / JR1).